We begin with the raw amino-acid sequence, 186 residues long: Probable nicotinate-nucleotide adenylyltransferase (186 aa).

The protein belongs to the NadD family.

It catalyses the reaction nicotinate beta-D-ribonucleotide + ATP + H(+) = deamido-NAD(+) + diphosphate. It functions in the pathway cofactor biosynthesis; NAD(+) biosynthesis; deamido-NAD(+) from nicotinate D-ribonucleotide: step 1/1. Its function is as follows. Catalyzes the reversible adenylation of nicotinate mononucleotide (NaMN) to nicotinic acid adenine dinucleotide (NaAD). The protein is Probable nicotinate-nucleotide adenylyltransferase of Thermus thermophilus (strain ATCC BAA-163 / DSM 7039 / HB27).